The sequence spans 1017 residues: Probable calcium-transporting ATPase 8, plasma membrane-type (1017 aa).

The Cytoplasmic segment spans residues 1–153 (MEKLDRYLQE…FVWDAFQDMT (153 aa)). The next 2 helical transmembrane spans lie at 154 to 174 (LIILMVCALLSVAVGLATEGW) and 177 to 197 (GMYDGLGIILSIFLVVMVTAV). Residues 198 to 228 (SDYKQSLQFKELDNEKKKIFIHVTRDGRRQK) lie on the Cytoplasmic side of the membrane. The next 2 membrane-spanning stretches (helical) occupy residues 229-249 (ISIYDLVVGDIVHLSIGDQVP) and 331-351 (VATVIGKIGLVFAILTFLVLL). The Cytoplasmic portion of the chain corresponds to 352-384 (VRFLIDKGMTVGLLKWYSTDALTIVNYFATAVT). Residues 385-405 (IIVVAVPEGLPLAVTLSLAFA) traverse the membrane as a helical segment. Aspartate 434 functions as the 4-aspartylphosphate intermediate in the catalytic mechanism. Aspartate 736 and aspartate 740 together coordinate Mg(2+). Residues 803 to 823 (IVALVINFVSACITGSAPLTA) form a helical membrane-spanning segment. Residues 824–825 (VQ) are Cytoplasmic-facing. A run of 2 helical transmembrane segments spans residues 826–846 (LLWVNMIMDTLGALALATEPP) and 875–895 (SLYQLFVLGALMFGGESLLNI). The Cytoplasmic portion of the chain corresponds to 896–938 (KGADSKSIINTLIFNSFVFCQVFNEINSREMQKINVFRGIISN). Transmembrane regions (helical) follow at residues 939–959 (WIFIAVIAATVAFQVVIIEFL) and 973–993 (WLLSVGLGSISLIVGVILKCI). Residues 994 to 1017 (PVGSGETSATPNGYRPLANGPDDI) lie on the Cytoplasmic side of the membrane.

The protein belongs to the cation transport ATPase (P-type) (TC 3.A.3) family. Type IIB subfamily.

It is found in the membrane. The enzyme catalyses Ca(2+)(in) + ATP + H2O = Ca(2+)(out) + ADP + phosphate + H(+). Activated by calmodulin. In terms of biological role, this magnesium-dependent enzyme catalyzes the hydrolysis of ATP coupled with the translocation of calcium from the cytosol out of the cell, into the endoplasmic reticulum, or into organelles. The protein is Probable calcium-transporting ATPase 8, plasma membrane-type of Oryza sativa subsp. japonica (Rice).